Here is a 597-residue protein sequence, read N- to C-terminus: Cysteine/serine-rich nuclear protein 3 (597 aa).

Disordered stretches follow at residues 22–64 (EDVD…TPSS) and 348–407 (CQGD…GFVE). The span at 42–52 (SSESADSGDSV) shows a compositional bias: low complexity. The segment covering 53–64 (NPSTSNHFTPSS) has biased composition (polar residues). The span at 348 to 359 (CQGDEEEEEEDG) shows a compositional bias: acidic residues. The span at 361-376 (SFCSGATDSSTQSLAP) shows a compositional bias: polar residues. Positions 378–401 (ESDEEEEEEEEEEEEEEEDDDDDK) are enriched in acidic residues.

This sequence belongs to the AXUD1 family. As to expression, detected only in the brain of 15 dpc, 18 dpc, newborn and P6 mice (at protein level).

It localises to the nucleus. Its function is as follows. Binds to the consensus sequence 5'-AGAGTG-3' and has transcriptional activator activity. Plays a role in apoptosis. The protein is Cysteine/serine-rich nuclear protein 3 (Csrnp3) of Mus musculus (Mouse).